Here is a 234-residue protein sequence, read N- to C-terminus: Ribose-5-phosphate isomerase A (234 aa).

Residues Ser-35 to Thr-38, Asp-91 to Asp-94, and Lys-105 to Gly-108 each bind substrate. Glu-114 (proton acceptor) is an active-site residue. Residue Lys-132 participates in substrate binding.

It belongs to the ribose 5-phosphate isomerase family. In terms of assembly, homodimer.

It catalyses the reaction aldehydo-D-ribose 5-phosphate = D-ribulose 5-phosphate. It functions in the pathway carbohydrate degradation; pentose phosphate pathway; D-ribose 5-phosphate from D-ribulose 5-phosphate (non-oxidative stage): step 1/1. Catalyzes the reversible conversion of ribose-5-phosphate to ribulose 5-phosphate. The sequence is that of Ribose-5-phosphate isomerase A from Methanococcus aeolicus (strain ATCC BAA-1280 / DSM 17508 / OCM 812 / Nankai-3).